A 237-amino-acid polypeptide reads, in one-letter code: MTRLVPALRLELTLQVRQKFLHAAVFSGLIWLAVLLPMPVSLRPVAEPYVLVGDIAIIGFFFVGGTVFFEKQERTIGAIVSTPLRFWEYLAAKLTVLLAISLFVAVVVATIVHGLGYHLLPLVAGIVLGTLLMLLVGFSSSLPFASVTDWFLAAVIPLAIMLAPPVVHYSGLWPNPVLYLIPTQGPLLLLGAAFDQVSLAPWQVGYAVVYPIVCAAGLCRAAKALFGRYVVQRSGVL.

Transmembrane regions (helical) follow at residues Phe-20–Val-40, Tyr-49–Phe-69, Val-96–Gly-116, Leu-119–Ser-139, Val-147–Val-167, and Leu-199–Cys-219.

As to quaternary structure, the complex is composed of 2 ATP-binding proteins and 2 transmembrane proteins.

It is found in the cell membrane. Functionally, part of the ABC transporter complex involved in fluoroquinolones export. Probably responsible for the translocation of the substrate across the membrane. In Mycobacterium tuberculosis (strain CDC 1551 / Oshkosh), this protein is Fluoroquinolones export permease protein MT2761.